Reading from the N-terminus, the 337-residue chain is F420-dependent glucose-6-phosphate dehydrogenase 2 (337 aa).

Position 40 (aspartate 40) interacts with coenzyme F420-(gamma-Glu)n. Histidine 41 functions as the Proton donor in the catalytic mechanism. Residues threonine 77 and 108–109 (TG) each bind coenzyme F420-(gamma-Glu)n. The active-site Proton acceptor is the glutamate 110. Coenzyme F420-(gamma-Glu)n contacts are provided by residues asparagine 113, 178-179 (GG), and 181-182 (VV). Residues threonine 196, lysine 199, lysine 260, and arginine 284 each coordinate substrate.

This sequence belongs to the F420-dependent glucose-6-phosphate dehydrogenase family. Homodimer.

The catalysed reaction is oxidized coenzyme F420-(gamma-L-Glu)(n) + D-glucose 6-phosphate + H(+) = 6-phospho-D-glucono-1,5-lactone + reduced coenzyme F420-(gamma-L-Glu)(n). Functionally, catalyzes the coenzyme F420-dependent oxidation of glucose 6-phosphate (G6P) to 6-phosphogluconolactone. This Rhodococcus jostii (strain RHA1) protein is F420-dependent glucose-6-phosphate dehydrogenase 2.